The primary structure comprises 72 residues: Cell division protein ZapB (72 aa).

Residues 3–71 (LSIIDQLEEK…LRSLLGQIDN (69 aa)) adopt a coiled-coil conformation.

This sequence belongs to the ZapB family. Homodimer. The ends of the coiled-coil dimer bind to each other, forming polymers. Interacts with FtsZ.

The protein localises to the cytoplasm. Its function is as follows. Non-essential, abundant cell division factor that is required for proper Z-ring formation. It is recruited early to the divisome by direct interaction with FtsZ, stimulating Z-ring assembly and thereby promoting cell division earlier in the cell cycle. Its recruitment to the Z-ring requires functional FtsA or ZipA. The polypeptide is Cell division protein ZapB (Haemophilus ducreyi (strain 35000HP / ATCC 700724)).